The following is a 238-amino-acid chain: Aspartate/glutamate leucyltransferase (238 aa).

The protein belongs to the R-transferase family. Bpt subfamily.

It localises to the cytoplasm. The catalysed reaction is N-terminal L-glutamyl-[protein] + L-leucyl-tRNA(Leu) = N-terminal L-leucyl-L-glutamyl-[protein] + tRNA(Leu) + H(+). The enzyme catalyses N-terminal L-aspartyl-[protein] + L-leucyl-tRNA(Leu) = N-terminal L-leucyl-L-aspartyl-[protein] + tRNA(Leu) + H(+). Its function is as follows. Functions in the N-end rule pathway of protein degradation where it conjugates Leu from its aminoacyl-tRNA to the N-termini of proteins containing an N-terminal aspartate or glutamate. This Aeromonas hydrophila subsp. hydrophila (strain ATCC 7966 / DSM 30187 / BCRC 13018 / CCUG 14551 / JCM 1027 / KCTC 2358 / NCIMB 9240 / NCTC 8049) protein is Aspartate/glutamate leucyltransferase.